Reading from the N-terminus, the 531-residue chain is Cation transporter HKT1;3 (531 aa).

The Cytoplasmic portion of the chain corresponds to 1–46 (MNHCLVVSHKKLQTFRTFAASKFSSFTKSAQKSIKYSFQFIYQNNP). The next 2 helical transmembrane spans lie at 47–67 (LFVH…SLKV) and 108–128 (LWVL…MLGI). Residues 129 to 190 (HFMRAEFGTK…GGHVEPKTIK (62 aa)) are Cytoplasmic-facing. The next 2 membrane-spanning stretches (helical) occupy residues 191–211 (FLGF…SLLI) and 264–284 (ILLL…APCL). Residues 285–321 (RLMVWSLEKITGKKDCRYILEYPKAIGYKHLMSTRES) lie on the Cytoplasmic side of the membrane. Helical transmembrane passes span 322-342 (VYLT…FLSL) and 383-403 (SAIL…SFLP). Topologically, residues 404–421 (RHDGEDSKTEKINKRKGL) are cytoplasmic. The next 2 helical transmembrane spans lie at 422–442 (LENW…LICI) and 494–514 (YGFA…VMLF). At 515-530 (GRLKTFNMKGGRAWKL) the chain is on the cytoplasmic side.

The protein belongs to the TrkH potassium transport family. HKT (TC 2.A.38.3) subfamily. In terms of assembly, interacts with CNIH1. As to expression, weakly expressed. In roots, expressed in epidermis, exodermis, cortex, and sieve elements and companion cells of phloem. In mature leaves, expressed in large highly vacuolated cells of the adaxial epidermis, phloem and xylem.

The protein resides in the endoplasmic reticulum membrane. It localises to the golgi apparatus membrane. It catalyses the reaction Na(+)(in) = Na(+)(out). Its function is as follows. Functions as a highly-selective sodium transporter. Does not seem to function as sodium-potassium cotransporter. May be involved in turgor changes for rolling and unrolling of leaves in response to environmental variations. This is Cation transporter HKT1;3 from Oryza sativa subsp. japonica (Rice).